The chain runs to 336 residues: Glycerol-3-phosphate dehydrogenase [NAD(P)+] (336 aa).

NADPH-binding residues include Ser11, Trp12, Arg32, and Lys106. Positions 106 and 136 each coordinate sn-glycerol 3-phosphate. Residue Ala140 coordinates NADPH. 5 residues coordinate sn-glycerol 3-phosphate: Lys191, Asp244, Ser254, Arg255, and Asn256. The active-site Proton acceptor is Lys191. An NADPH-binding site is contributed by Arg255. NADPH is bound by residues Val279 and Glu281.

Belongs to the NAD-dependent glycerol-3-phosphate dehydrogenase family.

It is found in the cytoplasm. The enzyme catalyses sn-glycerol 3-phosphate + NAD(+) = dihydroxyacetone phosphate + NADH + H(+). It catalyses the reaction sn-glycerol 3-phosphate + NADP(+) = dihydroxyacetone phosphate + NADPH + H(+). Its pathway is membrane lipid metabolism; glycerophospholipid metabolism. Catalyzes the reduction of the glycolytic intermediate dihydroxyacetone phosphate (DHAP) to sn-glycerol 3-phosphate (G3P), the key precursor for phospholipid synthesis. This is Glycerol-3-phosphate dehydrogenase [NAD(P)+] from Frankia casuarinae (strain DSM 45818 / CECT 9043 / HFP020203 / CcI3).